The chain runs to 241 residues: Transmembrane protein 176A (241 aa).

Serine 38 carries the post-translational modification Phosphoserine. 4 helical membrane passes run 65–85, 93–113, 127–147, and 193–213; these read WVMQ…LYIF, SGAP…AFIY, LLAL…AGRF, and LFIS…LASL.

The protein belongs to the TMEM176 family. Interacts with MCOLN2.

The protein localises to the membrane. The chain is Transmembrane protein 176A (TMEM176A) from Bos taurus (Bovine).